The sequence spans 319 residues: tRNA-cytidine(32) 2-sulfurtransferase (319 aa).

A PP-loop motif motif is present at residues 43–48 (SGGKDS). 3 residues coordinate [4Fe-4S] cluster: Cys-118, Cys-121, and Cys-209.

This sequence belongs to the TtcA family. In terms of assembly, homodimer. The cofactor is Mg(2+). Requires [4Fe-4S] cluster as cofactor.

It is found in the cytoplasm. It carries out the reaction cytidine(32) in tRNA + S-sulfanyl-L-cysteinyl-[cysteine desulfurase] + AH2 + ATP = 2-thiocytidine(32) in tRNA + L-cysteinyl-[cysteine desulfurase] + A + AMP + diphosphate + H(+). The protein operates within tRNA modification. In terms of biological role, catalyzes the ATP-dependent 2-thiolation of cytidine in position 32 of tRNA, to form 2-thiocytidine (s(2)C32). The sulfur atoms are provided by the cysteine/cysteine desulfurase (IscS) system. This Neisseria meningitidis serogroup A / serotype 4A (strain DSM 15465 / Z2491) protein is tRNA-cytidine(32) 2-sulfurtransferase.